The chain runs to 41 residues: Large ribosomal subunit protein bL36 (41 aa).

This sequence belongs to the bacterial ribosomal protein bL36 family.

The sequence is that of Large ribosomal subunit protein bL36 from Jannaschia sp. (strain CCS1).